Here is a 743-residue protein sequence, read N- to C-terminus: Threonine synthase-like 1 (743 aa).

The residue at position 281 (Lys281) is an N6-acetyllysine. Position 351 is an N6-(pyridoxal phosphate)lysine (Lys351).

Belongs to the threonine synthase family. The cofactor is pyridoxal 5'-phosphate.

The protein is Threonine synthase-like 1 (THNSL1) of Macaca fascicularis (Crab-eating macaque).